The chain runs to 208 residues: Coiled-coil domain-containing protein 25 (208 aa).

Residues 1-105 (MVFYFTSSSV…SNLKKTADMD (105 aa)) are Extracellular-facing. Positions 21–25 (KDKYE) are DNA-binding. Lysine 23 carries the post-translational modification N6-acetyllysine. Residues 106–122 (VGQIGFHRQKDVKIVTV) traverse the membrane as a helical segment. Residues 117–187 (VKIVTVEKKV…REMDELRSYS (71 aa)) adopt a coiled-coil conformation. Topologically, residues 123-208 (EKKVNEILNR…QDGNDSDEFM (86 aa)) are cytoplasmic. The segment covering 144-184 (LAAEKEGRDREERNEKKAQIQEMKRKEKEEMKKKREMDELR) has biased composition (basic and acidic residues). The disordered stretch occupies residues 144 to 208 (LAAEKEGRDR…QDGNDSDEFM (65 aa)). Serine 204 is modified (phosphoserine).

This sequence belongs to the CCDC25 family. In terms of assembly, interacts (via cytoplasmic region) with ILK.

The protein resides in the cell membrane. It localises to the endomembrane system. Functionally, transmembrane receptor that senses neutrophil extracellular traps (NETs) and triggers the ILK-PARVB pathway to enhance cell motility. NETs are mainly composed of DNA fibers and are released by neutrophils to bind pathogens during inflammation. Formation of NETs is also associated with cancer metastasis, NET-DNA acting as a chemotactic factor to attract cancer cells. Specifically binds NETs on its extracellular region, in particular the 8-OHdG-enriched DNA present in NETs, and recruits ILK, initiating the ILK-PARVB cascade to induce cytoskeleton rearrangement and directional migration of cells. In the context of cancer, promotes cancer metastasis by sensing NETs and promoting migration of tumor cells. This Mus musculus (Mouse) protein is Coiled-coil domain-containing protein 25.